Reading from the N-terminus, the 536-residue chain is Pre-mRNA-splicing factor SLU7-B (536 aa).

Residues 1-42 form a disordered region; sequence MATASVAFKSREDHRKKLELEEARKAGLAPAEVDEDGKEINP. The span at 9-25 shows a compositional bias: basic and acidic residues; sequence KSREDHRKKLELEEARK. The CCHC-type zinc finger occupies 96–109; it reads CINCGAMTHSSKAC. Disordered regions lie at residues 176-201 and 488-507; these read LKKL…DLDD and KEDL…YNVN. Positions 187–200 are enriched in acidic residues; the sequence is NGDDATSDGEEDLD. Ser-193 is subject to Phosphoserine. Positions 486–493 match the Nuclear localization signal motif; it reads LKKEDLSR. Residues 488 to 501 are compositionally biased toward basic and acidic residues; sequence KEDLSRREEKDERK.

It belongs to the SLU7 family. As to quaternary structure, interacts with PHYB in photobodies under red light.

The protein localises to the nucleus. Functionally, participates in the second catalytic step of pre-mRNA splicing, when the free hydroxyl group of exon I attacks the 3'-splice site to generate spliced mRNA and the excised lariat intron. Splicing factor acting as a negative regulator of seedling photomorphogenesis by antagonizing PHYB signaling to promote light-induced hypocotyl elongation. Prevents the accumulation of functionally spliced RVE8a form, a circadian clock regulator mediating the transcriptional activation of clock genes containing evening elements (EE), but promotes PIF4 expression to fine-tune hypocotyl elongation in the light. Together with SMP1, involved in the timing of cell cycle arrest during leaf development, in a STRUWWELPETER (SWP) dependent manner; promotes cell proliferation in developing organs. The polypeptide is Pre-mRNA-splicing factor SLU7-B (Arabidopsis thaliana (Mouse-ear cress)).